We begin with the raw amino-acid sequence, 353 residues long: GDP-mannose transporter (353 aa).

At 1–31 (MGLLLSYLFGYIFYSVNKKFHIMEKFGASNS) the chain is on the cytoplasmic side. A helical transmembrane segment spans residues 32-52 (IVNNGPVSIFAYCASSILMTV). The Lumenal segment spans residues 53–66 (TNKFVVGAYEFNLN). Residues 67-87 (FFLLAVQAAVCLVTIATLKGL) form a helical membrane-spanning segment. The Cytoplasmic portion of the chain corresponds to 88–102 (GIITYRQFNKDEAKK). The helical transmembrane segment at 103–122 (WFPIAFLLVLMIYTSSKALQ) threads the bilayer. Over 123–125 (YLS) the chain is Lumenal. A helical membrane pass occupies residues 126–148 (IPVYTIFKNLTIILIAYGEVIWF). Residues 149–154 (GGKVTT) lie on the Cytoplasmic side of the membrane. Residues 155-172 (MALGSFILMVLSSVIAYY) traverse the membrane as a helical segment. Residues 173-187 (GDTAETGEKTAEMHL) are Lumenal-facing. Residues 188 to 208 (LYLGYAWMFTNCFSSAAFVLI) form a helical membrane-spanning segment. Residues 209 to 227 (MRKRIKLTNFKDFDTMYYN) lie on the Cytoplasmic side of the membrane. A helical membrane pass occupies residues 228 to 248 (NLLSLPLLLVFSFLFEDWSSV). Residues 249–262 (NLNKNFPPDNRNTT) lie on the Lumenal side of the membrane. Asparagine 260 carries an N-linked (GlcNAc...) asparagine glycan. The helical transmembrane segment at 263–283 (IFVMILSGASSVGISYCSAWC) threads the bilayer. The Cytoplasmic portion of the chain corresponds to 284–290 (VRVTSST). Residues 291–313 (TYSMVGALNKLPIALSGLVFFNA) form a helical membrane-spanning segment. At 314–316 (AVN) the chain is on the lumenal side. The chain crosses the membrane as a helical span at residues 317-336 (FWSVSSIFVGFLAGVFYAVA). The Cytoplasmic portion of the chain corresponds to 337-353 (KQKQQKENAQQLPVANK).

This sequence belongs to the TPT transporter family. SLC35D subfamily. In terms of assembly, homooligomer.

The protein resides in the golgi apparatus membrane. It localises to the cytoplasmic vesicle membrane. Its subcellular location is the endoplasmic reticulum membrane. Its function is as follows. Involved in the import of GDP-mannose from the cytoplasm into the Golgi lumen. This is GDP-mannose transporter (VRG4) from Meyerozyma guilliermondii (strain ATCC 6260 / CBS 566 / DSM 6381 / JCM 1539 / NBRC 10279 / NRRL Y-324) (Yeast).